Here is a 427-residue protein sequence, read N- to C-terminus: Glutamate-1-semialdehyde 2,1-aminomutase (427 aa).

Lys264 is subject to N6-(pyridoxal phosphate)lysine.

Belongs to the class-III pyridoxal-phosphate-dependent aminotransferase family. HemL subfamily. In terms of assembly, homodimer. It depends on pyridoxal 5'-phosphate as a cofactor.

It is found in the cytoplasm. The catalysed reaction is (S)-4-amino-5-oxopentanoate = 5-aminolevulinate. Its pathway is porphyrin-containing compound metabolism; protoporphyrin-IX biosynthesis; 5-aminolevulinate from L-glutamyl-tRNA(Glu): step 2/2. The sequence is that of Glutamate-1-semialdehyde 2,1-aminomutase from Clostridium botulinum (strain Alaska E43 / Type E3).